Here is a 97-residue protein sequence, read N- to C-terminus: Co-chaperonin GroES (97 aa).

The protein belongs to the GroES chaperonin family. Heptamer of 7 subunits arranged in a ring. Interacts with the chaperonin GroEL.

The protein resides in the cytoplasm. In terms of biological role, together with the chaperonin GroEL, plays an essential role in assisting protein folding. The GroEL-GroES system forms a nano-cage that allows encapsulation of the non-native substrate proteins and provides a physical environment optimized to promote and accelerate protein folding. GroES binds to the apical surface of the GroEL ring, thereby capping the opening of the GroEL channel. This Erwinia tasmaniensis (strain DSM 17950 / CFBP 7177 / CIP 109463 / NCPPB 4357 / Et1/99) protein is Co-chaperonin GroES.